The chain runs to 88 residues: Small ribosomal subunit protein bS20 (88 aa).

The tract at residues 1–27 (MANTPQAKKRARQNEKARKHNASMRSM) is disordered. Residues 7–22 (AKKRARQNEKARKHNA) are compositionally biased toward basic residues.

The protein belongs to the bacterial ribosomal protein bS20 family.

Functionally, binds directly to 16S ribosomal RNA. The chain is Small ribosomal subunit protein bS20 from Cellvibrio japonicus (strain Ueda107) (Pseudomonas fluorescens subsp. cellulosa).